The following is a 193-amino-acid chain: Protein PapJ (193 aa).

The N-terminal stretch at 1–27 is a signal peptide; that stretch reads MVVNKTTAVLYLIALSLSGFIHTFLRA.

It is found in the periplasm. Its function is as follows. This protein maintains pilus integrity and thus is an important participant in pilus assembly. It may function as molecular chaperone directly or indirectly in the correct assembly of PapA subunits. The sequence is that of Protein PapJ (papJ) from Escherichia coli.